The sequence spans 422 residues: Protein phosphatase 1 regulatory subunit 36 (422 aa).

In terms of assembly, interacts with PPP1CA.

Its function is as follows. Inhibits phosphatase activity of protein phosphatase 1 (PP1) complexes. The polypeptide is Protein phosphatase 1 regulatory subunit 36 (PPP1R36) (Homo sapiens (Human)).